The primary structure comprises 163 residues: SsrA-binding protein (163 aa).

This sequence belongs to the SmpB family.

The protein resides in the cytoplasm. Functionally, required for rescue of stalled ribosomes mediated by trans-translation. Binds to transfer-messenger RNA (tmRNA), required for stable association of tmRNA with ribosomes. tmRNA and SmpB together mimic tRNA shape, replacing the anticodon stem-loop with SmpB. tmRNA is encoded by the ssrA gene; the 2 termini fold to resemble tRNA(Ala) and it encodes a 'tag peptide', a short internal open reading frame. During trans-translation Ala-aminoacylated tmRNA acts like a tRNA, entering the A-site of stalled ribosomes, displacing the stalled mRNA. The ribosome then switches to translate the ORF on the tmRNA; the nascent peptide is terminated with the 'tag peptide' encoded by the tmRNA and targeted for degradation. The ribosome is freed to recommence translation, which seems to be the essential function of trans-translation. The polypeptide is SsrA-binding protein (Buchnera aphidicola subsp. Schizaphis graminum (strain Sg)).